The chain runs to 1034 residues: Translation initiation factor IF-2 (1034 aa).

Disordered stretches follow at residues 118 to 140 and 154 to 446; these read AAEAVDMQPESVEAQAPAPQSVE and EAEA…NESA. 2 stretches are compositionally biased toward low complexity: residues 162–178 and 212–228; these read TPPVETPAVEAVEAAAP and PAVKAEAEPQSAQPAAS. Basic and acidic residues predominate over residues 304–315; sequence DRAREDARRAAE. The tr-type G domain occupies 535 to 702; the sequence is PRAPVVTVMG…NVLLQAEILE (168 aa). Positions 544-551 are G1; it reads GHVDHGKT. A GTP-binding site is contributed by 544–551; the sequence is GHVDHGKT. The G2 stretch occupies residues 569–573; sequence GITQH. A G3 region spans residues 590–593; the sequence is DTPG. Residues 590-594 and 644-647 each bind GTP; these read DTPGH and NKID. The tract at residues 644–647 is G4; it reads NKID. Positions 680-682 are G5; sequence SAK.

Belongs to the TRAFAC class translation factor GTPase superfamily. Classic translation factor GTPase family. IF-2 subfamily.

It localises to the cytoplasm. Its function is as follows. One of the essential components for the initiation of protein synthesis. Protects formylmethionyl-tRNA from spontaneous hydrolysis and promotes its binding to the 30S ribosomal subunits. Also involved in the hydrolysis of GTP during the formation of the 70S ribosomal complex. The sequence is that of Translation initiation factor IF-2 from Bordetella avium (strain 197N).